A 357-amino-acid chain; its full sequence is Popeye domain-containing protein 1 (357 aa).

Residues 1–38 lie on the Extracellular side of the membrane; it reads MDTTAISPLTPLGVIPDLKNATSVPFNETACENWKEIH. N-linked (GlcNAc...) asparagine glycans are attached at residues N20 and N27. A helical membrane pass occupies residues 39-59; it reads HLVFHVANICFAAGLVIPTTL. The Cytoplasmic segment spans residues 60–62; it reads NLH. The helical transmembrane segment at 63-83 threads the bilayer; it reads MIFLRGLLTVGCALFIIWATL. Topologically, residues 84–89 are extracellular; it reads YRCALD. Residues 90-110 form a helical membrane-spanning segment; the sequence is IMIWNSVFLVVNLLHFIYLVY. Over 111–357 the chain is Cytoplasmic; it reads KRRPIKIEKE…AEKLELQRLP (247 aa). Over residues 309-323 the composition is skewed to low complexity; sequence GTSSSSSLRPGRTSP. The interval 309–357 is disordered; sequence GTSSSSSLRPGRTSPYLRTSAKMKPIEESVEDDVFEAPSAEKLELQRLP. The span at 347–357 shows a compositional bias: basic and acidic residues; the sequence is SAEKLELQRLP.

The protein belongs to the popeye family. Homodimer. Homodimerization requires the C-terminus cytoplasmic region. In terms of tissue distribution, expressed in the heart and skeletal muscle (at protein level). Isoform 1 and isoform 4: expressed in heart, muscle, brain, stomach, kidney, lung and spleen.

The protein resides in the lateral cell membrane. The protein localises to the cell junction. It localises to the tight junction. Its subcellular location is the membrane. It is found in the cell membrane. The protein resides in the sarcolemma. The protein localises to the caveola. Cell adhesion molecule involved in the establishment and/or maintenance of cell integrity. Involved in the formation and regulation of the tight junction (TJ) paracellular permeability barrier in epithelial cells. Induces primordial adhesive contact and aggregation of epithelial cells in a Ca(2+)-independent manner. Involved in epithelial movement during corneal sheet formation and regeneration. May play a role in VAMP3-mediated vesicular transport and recycling of receptor molecules. May play a role in the regulation of cell shape and movement by modulating the Rho-GTPase activity. May be involved in skeletal muscle and heart development as well as in the maintenance of heart function. May also be involved in striated muscle regeneration and in the regulation of cell spreading. The chain is Popeye domain-containing protein 1 (POPDC1) from Gallus gallus (Chicken).